Here is a 604-residue protein sequence, read N- to C-terminus: Matrix metalloproteinase-21 (604 aa).

The N-terminal stretch at 1-22 is a signal peptide; sequence MPSIKLLVWCCLCVISPRLCHS. Positions 23–180 are excised as a propeptide; the sequence is EKLFHSRDRS…PDPPKIRRKR (158 aa). Positions 132 to 175 are disordered; that stretch reads KPRCGVPDNQMAKKETEKPTAAQSLENKTKDSENVTQQNPDPPK. The Cysteine switch motif lies at 133 to 140; sequence PRCGVPDN. C135 lines the Zn(2+) pocket. N158 and N165 each carry an N-linked (GlcNAc...) asparagine glycan. Position 318 (H318) interacts with Zn(2+). The active site involves E319. Zn(2+)-binding residues include H322 and H328. The cysteines at positions 364 and 595 are disulfide-linked. Hemopexin repeat units lie at residues 365-424, 426-482, 483-531, and 538-594; these read EGPF…WHGI, VQNI…FPGI, PSPI…FPAV, and KGNI…WFDI. N404 and N407 each carry an N-linked (GlcNAc...) asparagine glycan.

Belongs to the peptidase M10A family. Zn(2+) serves as cofactor. Requires Ca(2+) as cofactor. Post-translationally, the precursor is cleaved by a furin endopeptidase.

Its subcellular location is the secreted. In terms of biological role, plays a specialized role in the generation of left-right asymmetry during embryogenesis. May act as a negative regulator of the NOTCH-signaling pathway. The sequence is that of Matrix metalloproteinase-21 (mmp21) from Xenopus laevis (African clawed frog).